We begin with the raw amino-acid sequence, 213 residues long: Phosphoribosyl-dephospho-CoA transferase (213 aa).

Residues D135 and D137 contribute to the active site.

This sequence belongs to the MdcG family.

It catalyses the reaction apo-[malonate decarboxylase ACP] + 2'-(5''-triphospho-alpha-D-ribosyl)-3'-dephospho-CoA = holo-[malonate decarboxylase ACP] + diphosphate. Its function is as follows. Transfers 2'-(5-triphosphoribosyl)-3'-dephosphocoenzyme-A to the apo-[acyl-carrier-protein] of the malonate decarboxylase to yield holo-[acyl-carrier-protein]. This chain is Phosphoribosyl-dephospho-CoA transferase, found in Xanthomonas euvesicatoria pv. vesicatoria (strain 85-10) (Xanthomonas campestris pv. vesicatoria).